Here is a 385-residue protein sequence, read N- to C-terminus: T-box transcription factor TBX10 (385 aa).

The segment at 22-61 (TTSSGWEPRLGSPFPSGPCTSSTGAQAVAEPTGQGPKNPR) is disordered. Positions 69 to 252 (LEMKPLWEEF…SNPFAKGFRE (184 aa)) form a DNA-binding region, T-box.

It is found in the nucleus. Its function is as follows. Probable transcriptional regulator involved in developmental processes. The chain is T-box transcription factor TBX10 (TBX10) from Homo sapiens (Human).